Reading from the N-terminus, the 386-residue chain is Trichocyst matrix protein T2-B (386 aa).

A signal peptide spans 1–19 (MKTIILALALIALVSSTQS). Residues 20–48 (DVIDTIKKIDQSPFGRTLFDTIWLELQTG) constitute a propeptide that is removed on maturation. A coiled-coil region spans residues 51–154 (LDRLVSTLTD…AEEHEDFEEK (104 aa)). A propeptide spanning residues 184–238 (KGKAAKQPHKFTKDVANLIQKHFTTSAKKTAKFQHRKGYSKLFKAFATIASKVEQ) is cleaved from the precursor. Residues 294–325 (ALANAISDLAALNDIIAQVEASLDTTVQRIEN) adopt a coiled-coil conformation.

This sequence belongs to the TMP family.

The protein resides in the trichocyst. In terms of biological role, structural protein that crystallize inside the trichocyst matrix. The protein is Trichocyst matrix protein T2-B (T2B) of Paramecium tetraurelia.